Reading from the N-terminus, the 272-residue chain is Putative bark agglutinin LECRPA3 (272 aa).

A signal peptide spans P1–S29. N-linked (GlcNAc...) asparagine glycans are attached at residues N36, N39, and N65. Mn(2+) is bound by residues E150 and D152. Positions 152, 154, 156, and 159 each coordinate Ca(2+). The Mn(2+) site is built by D159 and H164.

It belongs to the leguminous lectin family. Homotetramer. In terms of tissue distribution, weak expression in bark. The lectin accumulates in the inner bark in autumn.

Bark lectins are storage proteins that probably maintain stocks of nitrogen during dormant period. Self-aggregatable molecules that can bind their own carbohydrate side chains. They could also play a role in the plant's defense against phytophagous invertebrates or herbivorous higher animals. The chain is Putative bark agglutinin LECRPA3 from Robinia pseudoacacia (Black locust).